The sequence spans 404 residues: Lissencephaly-1 homolog (404 aa).

The LisH domain occupies 7–39 (QKEEINRAIAEYMQNNGYSESFSVFLKESSLSE). Residues 54–81 (TTVLRLQRKVNDLESKLQESQREINHGA) adopt a coiled-coil conformation. A compositionally biased stretch (basic and acidic residues) spans 69 to 89 (KLQESQREINHGAPTRDKRQA). The tract at residues 69-90 (KLQESQREINHGAPTRDKRQAA) is disordered. WD repeat units lie at residues 104–145 (GHRL…RTLK), 146–185 (GHTD…DCLK), 189–228 (GHEH…CVYT), 231–270 (GHND…AKLV), 273–327 (DHEH…VLFT), 330–369 (AHEN…CMKA), and 372–404 (AHEH…WECR).

The protein belongs to the WD repeat LIS1/nudF family. As to quaternary structure, component of a dynein-regulating complex composed of at least lis-1 and nud-2. Interacts with nud-2; the interaction is direct. In terms of tissue distribution, expressed in all classes of neurons in the ventral cord. Expressed in the multinucleate spermathecal valves and adult seam cells.

The protein resides in the cytoplasm. It is found in the cytoskeleton. Its subcellular location is the microtubule organizing center. It localises to the centrosome. The protein localises to the chromosome. The protein resides in the centromere. It is found in the kinetochore. Its subcellular location is the nucleus envelope. Positively regulates the activity of the minus-end directed microtubule motor protein dynein. May enhance dynein-mediated microtubule sliding by targeting dynein to the microtubule plus end. Required for several dynein- and microtubule-dependent processes such as nuclear migration during cell division. Part of a complex with nud-2, which is recruited to the nuclear envelope by unc-83, where, in turn, it recruits dynein to the nuclear surface and regulates nuclear migration in hypodermal precursor cells. Plays a role in GABAergic synaptic vesicle localization in the ventral nerve cord. Required for neuronal cell differentiation. The chain is Lissencephaly-1 homolog from Caenorhabditis elegans.